The chain runs to 267 residues: Diphthine synthase (267 aa).

Residues leucine 9, aspartate 87, isoleucine 90, 115–116 (SI), leucine 166, leucine 205, and histidine 230 contribute to the S-adenosyl-L-methionine site.

This sequence belongs to the diphthine synthase family. In terms of assembly, homodimer.

It carries out the reaction 2-[(3S)-amino-3-carboxypropyl]-L-histidyl-[translation elongation factor 2] + 3 S-adenosyl-L-methionine = diphthine-[translation elongation factor 2] + 3 S-adenosyl-L-homocysteine + 3 H(+). It functions in the pathway protein modification; peptidyl-diphthamide biosynthesis. Functionally, S-adenosyl-L-methionine-dependent methyltransferase that catalyzes the trimethylation of the amino group of the modified target histidine residue in translation elongation factor 2 (EF-2), to form an intermediate called diphthine. The three successive methylation reactions represent the second step of diphthamide biosynthesis. In Staphylothermus marinus (strain ATCC 43588 / DSM 3639 / JCM 9404 / F1), this protein is Diphthine synthase.